The primary structure comprises 208 residues: Putative chemokine-related protein FP248 (208 aa).

An N-terminal signal peptide occupies residues 1–23 (MGTGGSLLCGCSLVLSCLCPSAS). A glycan (N-linked (GlcNAc...) asparagine) is linked at asparagine 29.

It is found in the secreted. This is Putative chemokine-related protein FP248 from Homo sapiens (Human).